Reading from the N-terminus, the 633-residue chain is ATP-dependent rRNA helicase SPB4 (633 aa).

The Q motif signature appears at 11–39; it reads FSALTPALSEWIIDAVDAMGFVKTTPVQH. In terms of domain architecture, Helicase ATP-binding spans 42 to 253; the sequence is IPMFMKNSDV…RVGLRNPVRI (212 aa). 55-62 contacts ATP; it reads AVTGSGKT. Acidic residues predominate over residues 119-131; it reads EPDDEDTDMEDAD. Residues 119–140 are disordered; it reads EPDDEDTDMEDADTPPKPTFPP. The DEAD box signature appears at 201 to 204; it reads DEAD. Residues 292 to 446 form the Helicase C-terminal domain; that stretch reads AMKKILSSLQ…EITVTDEDAK (155 aa). A coiled-coil region spans residues 530-629; sequence AYKDKAREKL…KQEAEDADFE (100 aa). 2 stretches are compositionally biased toward basic and acidic residues: residues 547–581 and 588–623; these read DKEE…EVRR and REHE…KQEA. The interval 547 to 633 is disordered; sequence DKEEGTKKKQ…EDADFEGFSD (87 aa). A compositionally biased stretch (acidic residues) spans 624–633; that stretch reads EDADFEGFSD.

This sequence belongs to the DEAD box helicase family. DDX55/SPB4 subfamily. As to quaternary structure, component of pre-60S ribosomal complexes.

It is found in the nucleus. The protein resides in the nucleolus. It carries out the reaction ATP + H2O = ADP + phosphate + H(+). In terms of biological role, ATP-binding RNA helicase involved in the biogenesis of 60S ribosomal subunits. Binds 90S pre-ribosomal particles and dissociates from pre-60S ribosomal particles after processing of 27SB pre-rRNA. Required for the normal formation of 18S rRNA through the processing of pre-rRNAs at sites A0, A1 and A2, and the normal formation of 25S and 5.8S rRNAs through the processing of pre-rRNAs at sites C1 and C2. This chain is ATP-dependent rRNA helicase SPB4, found in Phaeosphaeria nodorum (strain SN15 / ATCC MYA-4574 / FGSC 10173) (Glume blotch fungus).